The sequence spans 353 residues: Anthranilate phosphoribosyltransferase (353 aa).

5-phospho-alpha-D-ribose 1-diphosphate is bound by residues glycine 86, 89–90, 96–99, 114–122, and serine 126; these read GD, NVST, and KHGNRAVSG. Glycine 86 provides a ligand contact to anthranilate. Serine 98 serves as a coordination point for Mg(2+). Asparagine 117 contributes to the anthranilate binding site. Arginine 172 contacts anthranilate. Mg(2+) is bound by residues aspartate 231 and glutamate 232.

This sequence belongs to the anthranilate phosphoribosyltransferase family. Homodimer. Mg(2+) serves as cofactor.

The catalysed reaction is N-(5-phospho-beta-D-ribosyl)anthranilate + diphosphate = 5-phospho-alpha-D-ribose 1-diphosphate + anthranilate. It participates in amino-acid biosynthesis; L-tryptophan biosynthesis; L-tryptophan from chorismate: step 2/5. Catalyzes the transfer of the phosphoribosyl group of 5-phosphorylribose-1-pyrophosphate (PRPP) to anthranilate to yield N-(5'-phosphoribosyl)-anthranilate (PRA). This is Anthranilate phosphoribosyltransferase from Pseudomonas syringae pv. syringae (strain B728a).